Consider the following 21-residue polypeptide: uncharacterized protein (21 aa).

This is an uncharacterized protein from Methanococcus voltae.